Reading from the N-terminus, the 611-residue chain is Podocan (611 aa).

The first 23 residues, 1-23, serve as a signal peptide directing secretion; the sequence is MAGSRGLPLLLLVLQLFLGPVLP. Positions 60-97 constitute an LRRNT domain; sequence PEPGPATVDCPRDCACSQEGVVDCGGIDLREFPGDLPE. LRR repeat units lie at residues 98 to 119, 122 to 145, 148 to 169, 170 to 190, and 193 to 213; these read HTNH…ELSR, RLET…AFEH, SLNY…LPNA, LISV…TFGQ, and NLRS…PDHM. Residue Asn215 is glycosylated (N-linked (GlcNAc...) asparagine). 15 LRR repeats span residues 219–239, 240–261, 264–284, 290–311, 312–332, 335–358, 361–382, 383–403, 406–427, 432–453, 477–490, 503–523, 524–545, 548–569, and 574–583; these read NVEI…HLPP, ALYK…AFSE, NLRE…DNET, SLEY…LPRS, LVLL…VLTP, NLEY…AFQG, KLHT…LPRR, VRTL…DFAT, FLEE…RDAF, LLRS…LPKN, QLRE…RLRS, GLQL…GLPP, SLEY…AFDS, NLKG…ESAF, and HLQVLDIEGN. Asn282 carries N-linked (GlcNAc...) asparagine glycosylation. N-linked (GlcNAc...) asparagine glycosylation is present at Asn411. The interval 585–611 is disordered; that stretch reads EFGNGSKDKDEEEEEEEEEEDEEEETR. A compositionally biased stretch (acidic residues) spans 594–611; sequence DEEEEEEEEEEDEEEETR.

Belongs to the small leucine-rich proteoglycan (SLRP) family. SLRP class V subfamily. As to quaternary structure, binds to type I collagen. In terms of processing, N-glycosylated. Kidney. Expressed in podocytes and likely vascular endothelial cells within the glomerulus.

The protein localises to the secreted. It localises to the extracellular space. Its subcellular location is the extracellular matrix. Its function is as follows. Negatively regulates cell proliferation and cell migration, especially in smooth muscle cells. This Mus musculus (Mouse) protein is Podocan (Podn).